The primary structure comprises 1205 residues: MSTGTYPYKMFKMDVTNLNKVEDVEIERLRAERELLRRQKEAAKNSSTNGSVNIEGTQDSNDLQYNAHLFKSSNPKEEYDSAIDVRNDISQDEDDYKRTNDVNDSYRLVRQYEAPKELLNEYADESYDPMQERQSKKQIQDRESDYQKQRYDRQLTPTRVDAFQPDGTQSNGRSYAEVMRQVELEKEERRVHMELNQRRREGTLKEVEEEESISDKKRELELNNTEISQKPKRSRWDQAPPSVTQVSTTKRRSRWDKAPENFTISEHVIENGISEDLINKEVNVVEEKLRPPVRLLTEEELNELLPSEGYAILEPPPGYLESIHPELLQKGTTLDTYHVPQEQELPLEKELPAALPTEIPGVGDLAFFKQEDVKYFGKLLKVEDEAKLTIAELRERKILRLLLKVKNGTPPMRKSALRQLTDQARDFGAAALFNQILPLLMERTLEDQERHLLVKVIDRILYKLDDLVRPFTHKILVVIEPLLIDEDYYARAEGREIISNLAKASGLAHMIATMRPDIDHVDEYVRNTTARAFSVVASALGVPALLPFLKAVCRSKKSWQARHTGVRIIQQIALLLGCSILPHLKNLVDCIGHGLEDEQQKVRIMTALSLSALAEAATPYGIEAFDSVLKPLWSGVQRHRGKSLAAFLKATGFIIPLMEPEYASHFTRRIMKILLREFNSPDEEMKKIVLKVVSQCASTDGVTPEYLRTDVLPEFFHCFWSRRMASDRRSYKQVVETTVVLAQQVGSRQIVERVVNNFKDESEPYRKMTAETVDKVIGSLGVSEIDERLEELLLDGVLFAFQEQSVEEKVILTCFSTVVNALGTRCKPYLPQIVSTILYRLNNKSANVREQAADLVSSITIVLKACGEEALMRKLGVVLYEYLGEEYPEVLGSILGAIKAIVSVVGMSSMQPPIRDLLPRLTPILRNRHEKVQENTIDLVGKIADRGSEYVSAREWMRICFELIDMLKAHKKSIRRAAVNTFGYISKAIGPQDVLATLLNNLKVQERQNRVCTTVAIAIVAETCMPFTVVPALMADYRTPEMNVQNGVLKSLAFMFEYIGEQARDYVYAITPLLADALMDRDAVHRQTAASVIKHLSLGCVGLGVEDAMIHLLNILWPNILEESPHVINAVREGIDGIRNCIGVGPIMAYLVQGLFHPSRKVRNTYWTSYNSAYVQSADAMVPYYPHVDDDQFNNYDMKTLHICI.

Disordered stretches follow at residues 39–58 (QKEA…EGTQ), 122–175 (YADE…GRSY), and 202–254 (GTLK…RRSR). Residues 44 to 58 (KNSSTNGSVNIEGTQ) are compositionally biased toward polar residues. Basic and acidic residues predominate over residues 130-153 (MQERQSKKQIQDRESDYQKQRYDR). HEAT repeat units follow at residues 393–429 (LRER…DFGA), 431–473 (ALFN…PFTH), 475–505 (ILVV…AKAS), 506–540 (GLAH…ASAL), 541–578 (GVPA…LLGC), 582–619 (PHLK…AATP), 665–702 (HFTR…TDGV), 745–782 (VGSR…SLGV), 828–865 (PYLP…VLKA), 912–949 (PPIR…RGSE), 954–991 (REWM…AIGP), 993–1024 (DVLA…AETC), 1025–1061 (MPFT…YIGE), 1065–1102 (DYVY…GCVG), 1107–1142 (DAMI…RNCI), and 1143–1179 (GVGP…QSAD).

This sequence belongs to the SF3B1 family. Belongs to the 40S cdc5-associated complex (or cwf complex), a spliceosome sub-complex reminiscent of a late-stage spliceosome composed of the U2, U5 and U6 snRNAs and at least brr2, cdc5, cwf2/prp3, cwf3/syf1, cwf4/syf3, cwf5/ecm2, spp42/cwf6, cwf7/spf27, cwf8, cwf9, cwf10, cwf11, cwf12, prp45/cwf13, cwf14, cwf15, cwf16, cwf17, cwf18, cwf19, cwf20, cwf21, cwf22, cwf23, cwf24, cwf25, cwf26, cyp7/cwf27, cwf28, cwf29/ist3, lea1, msl1, prp5/cwf1, prp10, prp12/sap130, prp17, prp22, sap61, sap62, sap114, sap145, slu7, smb1, smd1, smd3, smf1, smg1 and syf2.

The protein localises to the nucleus. Contacts pre-mRNA on both sides of the branch site early in spliceosome assembly. The chain is U2 snRNP component prp10 (prp10) from Schizosaccharomyces pombe (strain 972 / ATCC 24843) (Fission yeast).